The primary structure comprises 166 residues: Ribosome maturation factor RimP (166 aa).

This sequence belongs to the RimP family.

It is found in the cytoplasm. Required for maturation of 30S ribosomal subunits. The sequence is that of Ribosome maturation factor RimP from Psychrobacter cryohalolentis (strain ATCC BAA-1226 / DSM 17306 / VKM B-2378 / K5).